We begin with the raw amino-acid sequence, 314 residues long: Olfactory receptor 52H1 (314 aa).

Topologically, residues 1–32 (MIIFNLSSYNPGPFILVGIPGLEQFHVWIGIP) are extracellular. Residue N5 is glycosylated (N-linked (GlcNAc...) asparagine). A helical membrane pass occupies residues 33 to 53 (FCIIYIVAVVGNCILLYLIVV). Residues 54–59 (EHSLHE) are Cytoplasmic-facing. The helical transmembrane segment at 60-80 (PMFFFLSMLAMTDLILSTAGV) threads the bilayer. At 81–101 (PKALSIFWLGAREITFPGCLT) the chain is on the extracellular side. C99 and C181 are oxidised to a cystine. The chain crosses the membrane as a helical span at residues 102 to 122 (QMFFLHYNFVLDSAILMAMAF). At 123–149 (DHYVAICSPLRYTTILTPKTIIKSAMG) the chain is on the cytoplasmic side. Residues 150–170 (ISFRSFCIILPDVFLLTCLPF) form a helical membrane-spanning segment. The Extracellular portion of the chain corresponds to 171 to 197 (CRTRIIPHTYCEHIGVAQLACADISIN). A helical transmembrane segment spans residues 198–218 (FWYGFCVPIMTVISDVILIAV). At 219–242 (SYAHILCAVFGLPSQDACQKALGT) the chain is on the cytoplasmic side. The helical transmembrane segment at 243 to 263 (CGSHVCVILMFYTPAFFSILA) threads the bilayer. The Extracellular portion of the chain corresponds to 264–275 (HRFGHNVSRTFH). N-linked (GlcNAc...) asparagine glycosylation occurs at N269. Residues 276–296 (IMFANLYIVIPPALNPMVYGV) form a helical membrane-spanning segment. The Cytoplasmic portion of the chain corresponds to 297-314 (KTKQIRDKVILLFSKGTG).

Belongs to the G-protein coupled receptor 1 family.

It is found in the membrane. In terms of biological role, odorant receptor. This chain is Olfactory receptor 52H1 (OR52H1), found in Homo sapiens (Human).